Reading from the N-terminus, the 440-residue chain is Chromosome partition protein MukF (440 aa).

The leucine-zipper stretch occupies residues 208-236 (LSETSGTLRELQDTLEAAGDKLQANLLRI).

It belongs to the MukF family. In terms of assembly, interacts, and probably forms a ternary complex, with MukE and MukB via its C-terminal region. The complex formation is stimulated by calcium or magnesium. It is required for an interaction between MukE and MukB.

The protein resides in the cytoplasm. It localises to the nucleoid. In terms of biological role, involved in chromosome condensation, segregation and cell cycle progression. May participate in facilitating chromosome segregation by condensation DNA from both sides of a centrally located replisome during cell division. Not required for mini-F plasmid partitioning. Probably acts via its interaction with MukB and MukE. Overexpression results in anucleate cells. It has a calcium binding activity. The chain is Chromosome partition protein MukF from Shigella boydii serotype 4 (strain Sb227).